The following is a 327-amino-acid chain: Nucleotide-binding protein Mflv_3714 (327 aa).

Residues 1–22 are compositionally biased toward basic and acidic residues; sequence MTRQGMRDDLRGEADSVVHDGT. Positions 1–29 are disordered; it reads MTRQGMRDDLRGEADSVVHDGTDDIDNEN. An ATP-binding site is contributed by 50–57; that stretch reads GLSGAGRG. Residue 101 to 104 participates in GTP binding; sequence DVRS.

The protein belongs to the RapZ-like family.

Displays ATPase and GTPase activities. In Mycolicibacterium gilvum (strain PYR-GCK) (Mycobacterium gilvum (strain PYR-GCK)), this protein is Nucleotide-binding protein Mflv_3714.